A 598-amino-acid polypeptide reads, in one-letter code: Nuclear receptor subfamily 4immunitygroup A member 1 (598 aa).

Disordered regions lie at residues 1 to 44 (MPCI…EAAP), 131 to 158 (YYGS…DGSF), 177 to 206 (LPKA…AQSP), and 221 to 265 (GESY…GSEG). Low complexity predominate over residues 134–145 (SPCSAPSPSTPS). The interval 171 to 466 (RAWTEQLPKA…PGEGKLIFCS (296 aa)) is required for nuclear import. A DNA-binding region (nuclear receptor) is located at residues 264 to 339 (EGRCAVCGDN…VGMVKEVVRT (76 aa)). 2 consecutive NR C4-type zinc fingers follow at residues 267–287 (CAVC…CEGC) and 303–327 (CLAN…FQKC). The tract at residues 268–354 (AVCGDNASCQ…RRGRLPSKPK (87 aa)) is required for binding NBRE-containing DNA. Positions 299-361 (AKYICLANKD…KPKQPPDASP (63 aa)) are required for the interaction with RXRA. S341 bears the Phosphoserine; by PKA mark. The tract at residues 341–361 (SLKGRRGRLPSKPKQPPDASP) is disordered. S351 bears the Phosphoserine mark. The NR LBD domain occupies 360-595 (SPANLLTSLV…PIIDKIFMDT (236 aa)). Positions 521 to 544 (PRRVEELQNRIASCLKEHVAAVAG) are binds lipopolysaccharide. Positions 584–595 (PPPIIDKIFMDT) are AF-2.

The protein belongs to the nuclear hormone receptor family. NR4 subfamily. In terms of assembly, binds the NGFI-B response element (NBRE) as a monomer. Binds the Nur response element (NurRE), consisting of two inverse NBRE-related octanucleotide repeats separated by 6 base-pairs, as a dimer. Interacts (via N-terminus) with NLRP3 (via LRR repeat domain); the interaction is direct, requires binding of NR4A1/Nur77 to NBRE-containing dsDNA and lipopolysaccharide, and leads to non-canonical NLRP3 inflammasome activation. Interacts with GADD45GIP1. Interacts with STK11. Interacts with IFI27. Heterodimer (via DNA-binding domain) with RXRA (via C-terminus); DNA-binding of the heterodimer is enhanced by 9-cis retinoic acid. Competes for the RXRA interaction with EP300 and thereby attenuates EP300 mediated acetylation of RXRA. Interacts with NCOA1. Interacts with NCOA2. Interacts with NCOA3. The cofactor is Zn(2+). Post-translationally, phosphorylated at Ser-351 by RPS6KA1 and RPS6KA3 in response to mitogenic or stress stimuli. Acetylated by p300/CBP, acetylation increases stability. Deacetylated by HDAC1. In terms of tissue distribution, fetal muscle and adult liver, brain and thyroid.

The protein localises to the nucleus. Its subcellular location is the cytoplasm. It localises to the cytosol. The protein resides in the mitochondrion. Its activity is regulated as follows. Its transcription factor activity is activated by binding cytosporone B (Csn-B) via its ligand-binding (NR LBD) domain and stimulates recruitment of coactivators NCOA1 and NCOA2, but not NCOA3, to promoters. Csn-B-binding is also accompanied by its translocation to the mitochondrion. Its transcription factor activity is activated by corticotropin-releasing hormone (CRH) and forskolin. Not activated by binding cytosporone C (Csn-C). Its function is as follows. Orphan nuclear receptor. Binds the NGFI-B response element (NBRE) 5'-AAAGGTCA-3'. Binds 9-cis-retinoic acid outside of its ligand-binding (NR LBD) domain. Participates in energy homeostasis by sequestrating the kinase STK11 in the nucleus, thereby attenuating cytoplasmic AMPK activation. Regulates the inflammatory response in macrophages by regulating metabolic adaptations during inflammation, including repressing the transcription of genes involved in the citric acid cycle (TCA). Inhibits NF-kappa-B signaling by binding to low-affinity NF-kappa-B binding sites, such as at the IL2 promoter. May act concomitantly with NR4A2 in regulating the expression of delayed-early genes during liver regeneration. Plays a role in the vascular response to injury. In terms of biological role, in the cytosol, upon its detection of both bacterial lipopolysaccharide (LPS) and NBRE-containing mitochondrial DNA released by GSDMD pores during pyroptosis, it promotes non-canonical NLRP3 inflammasome activation by stimulating association of NLRP3 and NEK7. This is Nuclear receptor subfamily 4immunitygroup A member 1 (NR4A1) from Homo sapiens (Human).